The sequence spans 525 residues: GMP synthase [glutamine-hydrolyzing] (525 aa).

Positions arginine 12–aspartate 206 constitute a Glutamine amidotransferase type-1 domain. The active-site Nucleophile is the cysteine 90. Residues histidine 180 and glutamate 182 contribute to the active site. The GMPS ATP-PPase domain maps to tryptophan 207–arginine 399. Serine 234–serine 240 contributes to the ATP binding site.

Homodimer.

It catalyses the reaction XMP + L-glutamine + ATP + H2O = GMP + L-glutamate + AMP + diphosphate + 2 H(+). It functions in the pathway purine metabolism; GMP biosynthesis; GMP from XMP (L-Gln route): step 1/1. Catalyzes the synthesis of GMP from XMP. This chain is GMP synthase [glutamine-hydrolyzing], found in Rhodospirillum rubrum (strain ATCC 11170 / ATH 1.1.1 / DSM 467 / LMG 4362 / NCIMB 8255 / S1).